The sequence spans 198 residues: Nucleoside triphosphate pyrophosphatase 1 (198 aa).

The Proton acceptor role is filled by Asp-75.

This sequence belongs to the Maf family. A divalent metal cation is required as a cofactor.

The protein localises to the cytoplasm. The catalysed reaction is a ribonucleoside 5'-triphosphate + H2O = a ribonucleoside 5'-phosphate + diphosphate + H(+). It catalyses the reaction a 2'-deoxyribonucleoside 5'-triphosphate + H2O = a 2'-deoxyribonucleoside 5'-phosphate + diphosphate + H(+). In terms of biological role, nucleoside triphosphate pyrophosphatase. May have a dual role in cell division arrest and in preventing the incorporation of modified nucleotides into cellular nucleic acids. The sequence is that of Nucleoside triphosphate pyrophosphatase 1 from Jannaschia sp. (strain CCS1).